Here is a 339-residue protein sequence, read N- to C-terminus: Phosphate acyltransferase (339 aa).

This sequence belongs to the PlsX family. Homodimer. Probably interacts with PlsY.

The protein localises to the cytoplasm. The enzyme catalyses a fatty acyl-[ACP] + phosphate = an acyl phosphate + holo-[ACP]. The protein operates within lipid metabolism; phospholipid metabolism. In terms of biological role, catalyzes the reversible formation of acyl-phosphate (acyl-PO(4)) from acyl-[acyl-carrier-protein] (acyl-ACP). This enzyme utilizes acyl-ACP as fatty acyl donor, but not acyl-CoA. The sequence is that of Phosphate acyltransferase from Dechloromonas aromatica (strain RCB).